Here is a 164-residue protein sequence, read N- to C-terminus: Lipocalin-like 1 protein (164 aa).

Belongs to the calycin superfamily. Lipocalin family.

This Homo sapiens (Human) protein is Lipocalin-like 1 protein (LCNL1).